Consider the following 223-residue polypeptide: Deoxyribose-phosphate aldolase (223 aa).

The Proton donor/acceptor role is filled by D91. K153 acts as the Schiff-base intermediate with acetaldehyde in catalysis. The active-site Proton donor/acceptor is K182.

The protein belongs to the DeoC/FbaB aldolase family. DeoC type 1 subfamily.

The protein resides in the cytoplasm. It catalyses the reaction 2-deoxy-D-ribose 5-phosphate = D-glyceraldehyde 3-phosphate + acetaldehyde. It functions in the pathway carbohydrate degradation; 2-deoxy-D-ribose 1-phosphate degradation; D-glyceraldehyde 3-phosphate and acetaldehyde from 2-deoxy-alpha-D-ribose 1-phosphate: step 2/2. Functionally, catalyzes a reversible aldol reaction between acetaldehyde and D-glyceraldehyde 3-phosphate to generate 2-deoxy-D-ribose 5-phosphate. The protein is Deoxyribose-phosphate aldolase of Streptococcus pyogenes serotype M12 (strain MGAS2096).